A 281-amino-acid polypeptide reads, in one-letter code: NADPH-dependent 7-cyano-7-deazaguanine reductase (281 aa).

Position 81-83 (81-83 (IES)) interacts with substrate. 83-84 (SK) contacts NADPH. Cys-188 functions as the Thioimide intermediate in the catalytic mechanism. Asp-195 serves as the catalytic Proton donor. 227–228 (HE) is a binding site for substrate. 256 to 257 (RG) contributes to the NADPH binding site.

This sequence belongs to the GTP cyclohydrolase I family. QueF type 2 subfamily. As to quaternary structure, homodimer.

The protein resides in the cytoplasm. It carries out the reaction 7-aminomethyl-7-carbaguanine + 2 NADP(+) = 7-cyano-7-deazaguanine + 2 NADPH + 3 H(+). It functions in the pathway tRNA modification; tRNA-queuosine biosynthesis. Its function is as follows. Catalyzes the NADPH-dependent reduction of 7-cyano-7-deazaguanine (preQ0) to 7-aminomethyl-7-deazaguanine (preQ1). This is NADPH-dependent 7-cyano-7-deazaguanine reductase from Polaromonas naphthalenivorans (strain CJ2).